The sequence spans 178 residues: Protein PilI (178 aa).

The 140-residue stretch at 34 to 173 folds into the CheW-like domain; it reads SWSGIGFRMG…PHALAQHQGF (140 aa).

Functionally, may be a part of a signal-transduction system that regulates twitching motility by controlling pilus function (extension and retraction). The chain is Protein PilI (pilI) from Pseudomonas aeruginosa (strain ATCC 15692 / DSM 22644 / CIP 104116 / JCM 14847 / LMG 12228 / 1C / PRS 101 / PAO1).